A 744-amino-acid chain; its full sequence is Cell surface receptor daf-4 (744 aa).

The signal sequence occupies residues 1–31 (MNQKGTVRLKALVLICLPLFLIATPVPVAVT). Residues 48–253 (WANTLVSKVA…IALLILAYVG (206 aa)) lie on the Extracellular side of the membrane. Asn60, Asn134, and Asn165 each carry an N-linked (GlcNAc...) asparagine glycan. The chain crosses the membrane as a helical span at residues 254–274 (WKFQQNKKEEIKKQQKIKFDM). Residues 275–744 (EKTDALEAGN…PSGTFGTFTT (470 aa)) are Cytoplasmic-facing. The Protein kinase domain occupies 306-603 (ITDFQLISKG…FARVWNHIMS (298 aa)). ATP-binding positions include 312–320 (ISKGRFGKV) and Lys338. Asp440 acts as the Proton acceptor in catalysis. Disordered stretches follow at residues 605-686 (PDSS…PEPE) and 724-744 (AGAD…TFTT). Residues 620–639 (RGVDDVEQSEKPEGIEEMQH) are compositionally biased toward basic and acidic residues. Residues 731–744 (STPTPSGTFGTFTT) show a composition bias toward low complexity.

Belongs to the protein kinase superfamily. TKL Ser/Thr protein kinase family. TGFB receptor subfamily. As to quaternary structure, may interact with daf-1 to regulate dauer larva development. Interacts with sma-10. In terms of tissue distribution, pharynx, intestine, hypodermis and body wall muscles in L1 through to adult stages. Also expressed in head neurons, ventral cord and tail neurons. Subset of head neurons show coexpression with daf-1 when dauer/nondauer decision is made.

The protein localises to the cell membrane. It catalyses the reaction L-threonyl-[receptor-protein] + ATP = O-phospho-L-threonyl-[receptor-protein] + ADP + H(+). The catalysed reaction is L-seryl-[receptor-protein] + ATP = O-phospho-L-seryl-[receptor-protein] + ADP + H(+). Functionally, involved in a TGF-beta pathway. May be a receptor for TGF-beta-like ligand daf-7. Controls the decision of whether or not larvae enter a developmentally arrested state, known as dauer, in response to environmental conditions. Regulates body size and male tail patterning. Involved in regulating entry into quiescence triggered by satiety. Involved in sensitivity to CO2 levels. The chain is Cell surface receptor daf-4 from Caenorhabditis elegans.